A 374-amino-acid chain; its full sequence is Chaperone protein DnaJ (374 aa).

The J domain maps to 5–71; the sequence is DLYAILGVCR…QKRASYDRFG (67 aa). Residues 132–210 form a CR-type zinc finger; the sequence is GVEKQIRIAT…CQGTGRVKDT (79 aa). Zn(2+) contacts are provided by Cys-145, Cys-148, Cys-162, Cys-165, Cys-184, Cys-187, Cys-198, and Cys-201. 4 CXXCXGXG motif repeats span residues 145–152, 162–169, 184–191, and 198–205; these read CGECHGSG, CPTCNGAG, CPTCHGRG, and CNKCQGTG.

This sequence belongs to the DnaJ family. Homodimer. Zn(2+) is required as a cofactor.

The protein localises to the cytoplasm. In terms of biological role, participates actively in the response to hyperosmotic and heat shock by preventing the aggregation of stress-denatured proteins and by disaggregating proteins, also in an autonomous, DnaK-independent fashion. Unfolded proteins bind initially to DnaJ; upon interaction with the DnaJ-bound protein, DnaK hydrolyzes its bound ATP, resulting in the formation of a stable complex. GrpE releases ADP from DnaK; ATP binding to DnaK triggers the release of the substrate protein, thus completing the reaction cycle. Several rounds of ATP-dependent interactions between DnaJ, DnaK and GrpE are required for fully efficient folding. Also involved, together with DnaK and GrpE, in the DNA replication of plasmids through activation of initiation proteins. This chain is Chaperone protein DnaJ, found in Dichelobacter nodosus (strain VCS1703A).